The chain runs to 246 residues: Acetoacetyl-CoA reductase (246 aa).

Residues 12–14 (GGI) and 88–92 (CAGIT) contribute to the NADP(+) site. Residues aspartate 94 and 147–150 (QFGQ) each bind substrate. Residue tyrosine 153 is the Proton acceptor of the active site. 183-186 (PGYV) contributes to the NADP(+) binding site. 184 to 185 (GY) contacts substrate.

It belongs to the short-chain dehydrogenases/reductases (SDR) family.

The protein resides in the cytoplasm. It carries out the reaction a (3R)-3-hydroxyacyl-CoA + NADP(+) = a 3-oxoacyl-CoA + NADPH + H(+). It functions in the pathway biopolymer metabolism; poly-(R)-3-hydroxybutanoate biosynthesis. The polypeptide is Acetoacetyl-CoA reductase (Allochromatium vinosum (strain ATCC 17899 / DSM 180 / NBRC 103801 / NCIMB 10441 / D) (Chromatium vinosum)).